Consider the following 494-residue polypeptide: Alpha-amylase-related protein (494 aa).

Residues M1–A20 form the signal peptide. Residue Q21 is modified to Pyrrolidone carboxylic acid. A disulfide bridge links C48 with C104. Residues N118, Q169, and D178 each contribute to the Ca(2+) site. Cysteines 157 and 171 form a disulfide. R206 is a chloride binding site. The Nucleophile role is filled by D208. Position 212 (H212) interacts with Ca(2+). The Proton donor role is filled by E245. Residues N308 and R343 each contribute to the chloride site. 3 disulfides stabilise this stretch: C376–C382, C418–C441, and C448–C460.

This sequence belongs to the glycosyl hydrolase 13 family. As to quaternary structure, monomer. It depends on Ca(2+) as a cofactor. Chloride is required as a cofactor.

It is found in the secreted. It carries out the reaction Endohydrolysis of (1-&gt;4)-alpha-D-glucosidic linkages in polysaccharides containing three or more (1-&gt;4)-alpha-linked D-glucose units.. The chain is Alpha-amylase-related protein (Amyrel) from Drosophila atripex (Fruit fly).